A 330-amino-acid chain; its full sequence is Intraflagellar transport protein 46 homolog (330 aa).

Disordered stretches follow at residues 1–21 (MDRPYDETVDIPDSEDIATPR) and 55–112 (SIKT…EGVY). Residues 7–16 (ETVDIPDSED) show a composition bias toward acidic residues. Basic and acidic residues predominate over residues 68-79 (SSSEKLCDRGSS). The segment covering 80 to 101 (DDDDDDDNDDDEDEDDDDDDEN) has biased composition (acidic residues).

This sequence belongs to the IFT46 family.

It is found in the cytoplasm. The protein resides in the cytoskeleton. Its subcellular location is the cilium basal body. The protein localises to the cell projection. It localises to the cilium. Functionally, forms part of a complex involved in intraflagellar transport (IFT), the bi-directional movement of particles required for the assembly, maintenance and functioning of primary cilia. In Schistosoma japonicum (Blood fluke), this protein is Intraflagellar transport protein 46 homolog.